The primary structure comprises 277 residues: Undecaprenyl-diphosphatase (277 aa).

7 helical membrane passes run 3–23 (YIIE…TEIF), 48–68 (LTLF…IYYF), 97–117 (ISYA…GLLI), 125–145 (LLSI…VFLL), 198–218 (SFLC…YDAI), 227–247 (IPGF…TIKI), and 257–277 (LIWF…LYII).

It belongs to the UppP family.

It localises to the cell membrane. The enzyme catalyses di-trans,octa-cis-undecaprenyl diphosphate + H2O = di-trans,octa-cis-undecaprenyl phosphate + phosphate + H(+). Functionally, catalyzes the dephosphorylation of undecaprenyl diphosphate (UPP). Confers resistance to bacitracin. The chain is Undecaprenyl-diphosphatase from Acholeplasma laidlawii (strain PG-8A).